The following is a 433-amino-acid chain: L-2-hydroxyglutarate dehydrogenase, mitochondrial (433 aa).

This sequence belongs to the L2HGDH family. The cofactor is FAD.

The protein localises to the mitochondrion. It carries out the reaction (S)-2-hydroxyglutarate + A = 2-oxoglutarate + AH2. The chain is L-2-hydroxyglutarate dehydrogenase, mitochondrial from Caenorhabditis elegans.